Here is a 521-residue protein sequence, read N- to C-terminus: Ribonuclease Y (521 aa).

The chain crosses the membrane as a helical span at residues 5–25 (TVWILISILLATVGAVVGFFV). The segment at 87 to 117 (KQENRLMQKEENLDRKDETLDNRERQLEKKE) is disordered. The KH domain occupies 211–274 (TVSVVNLPND…ETARIALDKL (64 aa)). The 94-residue stretch at 337 to 430 (VLKHSMEVAY…VAAADALSAA (94 aa)) folds into the HD domain.

The protein belongs to the RNase Y family.

The protein resides in the cell membrane. Its function is as follows. Endoribonuclease that initiates mRNA decay. This is Ribonuclease Y from Bacillus mycoides (strain KBAB4) (Bacillus weihenstephanensis).